The chain runs to 123 residues: Large ribosomal subunit protein bL12 (123 aa).

K84 carries the post-translational modification N6-methyllysine. The segment at 94–123 (PATLKEGMSKEDGDEAKTKLEEAGASVELK) is disordered. Residues 100–115 (GMSKEDGDEAKTKLEE) are compositionally biased toward basic and acidic residues.

This sequence belongs to the bacterial ribosomal protein bL12 family. In terms of assembly, homodimer. Part of the ribosomal stalk of the 50S ribosomal subunit. Forms a multimeric L10(L12)X complex, where L10 forms an elongated spine to which 2 to 4 L12 dimers bind in a sequential fashion. Binds GTP-bound translation factors.

Its function is as follows. Seems to be the binding site for several of the factors involved in protein synthesis and appears to be essential for accurate translation. In terms of biological role, forms part of the ribosomal stalk which helps the ribosome interact with GTP-bound translation factors. Is thus essential for accurate translation. In Halophilic eubacterium NRCC 41227, this protein is Large ribosomal subunit protein bL12.